We begin with the raw amino-acid sequence, 571 residues long: Coiled-coil domain-containing protein 22 homolog (571 aa).

Coiled-coil stretches lie at residues 406 to 434 (MMDL…SRTA) and 509 to 571 (CAEL…AHLR).

Belongs to the CCDC22 family.

This chain is Coiled-coil domain-containing protein 22 homolog, found in Culex quinquefasciatus (Southern house mosquito).